The following is a 406-amino-acid chain: Tyrosine-protein phosphatase non-receptor type 2 (406 aa).

A Tyrosine-protein phosphatase domain is found at 5–275 (IEREFEELDA…RFSYMAIIEG (271 aa)). At tyrosine 22 the chain carries Phosphotyrosine. Serine 52 carries the phosphoserine modification. The residue at position 68 (tyrosine 68) is a Phosphotyrosine. Substrate-binding positions include aspartate 182, 216-222 (CSAGIGR), and glutamine 260. Residue cysteine 216 is the Phosphocysteine intermediate of the active site. S-nitrosocysteine is present on cysteine 216. 5 positions are modified to phosphoserine: serine 293, serine 298, serine 304, serine 320, and serine 339. Positions 341-406 (ESILRKRIRE…ALVGWTLLFH (66 aa)) are endoplasmic reticulum location. A mediates interaction with STX17 region spans residues 371–406 (ERKRKRWLYWQPILTKMGFVSVILVGALVGWTLLFH).

The protein belongs to the protein-tyrosine phosphatase family. Non-receptor class 1 subfamily. In terms of assembly, interacts with RMDN3. Isoform 1 interacts with TMED9. Isoform 1 interacts with STX17; dephosphorylates STX17. Interacts with ITGA1 (via cytoplasmic domain); activates the phosphatase activity towards EGFR. Interacts with TRAF2; probably involved in tumor necrosis factor-mediated signaling. Interacts with MET. Interacts with FAM220A and STAT3; interaction with FAM220A promotes interaction of PTPN2 with transcriptional activator STAT3, leading to dephosphorylation of STAT3 by PTPN2 and negative regulation of STAT3 transcriptional activator activity. In terms of processing, specifically phosphorylated in a cell cycle-dependent manner by cyclin-dependent kinases CDK1 and CDK2. Probably activated through phosphorylation by PKR. As to expression, ubiquitously expressed. The highest expression levels were found in ovary, testis, thymus and kidney.

The protein resides in the endoplasmic reticulum. It is found in the endoplasmic reticulum-Golgi intermediate compartment. The protein localises to the nucleus. It localises to the cytoplasm. Its subcellular location is the cell membrane. It catalyses the reaction O-phospho-L-tyrosyl-[protein] + H2O = L-tyrosyl-[protein] + phosphate. Functionally, non-receptor type tyrosine-specific phosphatase that dephosphorylates receptor protein tyrosine kinases including INSR, EGFR, CSF1R, PDGFR. Also dephosphorylates non-receptor protein tyrosine kinases like JAK1, JAK2, JAK3, Src family kinases, STAT1, STAT3 and STAT6 either in the nucleus or the cytoplasm. Negatively regulates numerous signaling pathways and biological processes like hematopoiesis, inflammatory response, cell proliferation and differentiation, and glucose homeostasis. Plays a multifaceted and important role in the development of the immune system. Functions in T-cell receptor signaling through dephosphorylation of FYN and LCK to control T-cells differentiation and activation. Dephosphorylates CSF1R, negatively regulating its downstream signaling and macrophage differentiation. Negatively regulates cytokine (IL2/interleukin-2 and interferon)-mediated signaling through dephosphorylation of the cytoplasmic kinases JAK1, JAK3 and their substrate STAT1, that propagate signaling downstream of the cytokine receptors. Also regulates the IL6/interleukin-6 and IL4/interleukin-4 cytokine signaling through dephosphorylation of STAT3 and STAT6 respectively. In addition to the immune system, it is involved in anchorage-dependent, negative regulation of EGF-stimulated cell growth. Activated by the integrin ITGA1/ITGB1, it dephosphorylates EGFR and negatively regulates EGF signaling. Dephosphorylates PDGFRB and negatively regulates platelet-derived growth factor receptor-beta signaling pathway and therefore cell proliferation. Negatively regulates tumor necrosis factor-mediated signaling downstream via MAPK through SRC dephosphorylation. May also regulate the hepatocyte growth factor receptor signaling pathway through dephosphorylation of the hepatocyte growth factor receptor MET. Also plays an important role in glucose homeostasis. For instance, negatively regulates the insulin receptor signaling pathway through the dephosphorylation of INSR and control gluconeogenesis and liver glucose production through negative regulation of the IL6 signaling pathways. May also bind DNA. The polypeptide is Tyrosine-protein phosphatase non-receptor type 2 (Ptpn2) (Mus musculus (Mouse)).